We begin with the raw amino-acid sequence, 154 residues long: Aspartate carbamoyltransferase regulatory chain (154 aa).

Residues Cys-109, Cys-114, Cys-138, and Cys-141 each contribute to the Zn(2+) site.

It belongs to the PyrI family. As to quaternary structure, contains catalytic and regulatory chains. It depends on Zn(2+) as a cofactor.

Functionally, involved in allosteric regulation of aspartate carbamoyltransferase. The chain is Aspartate carbamoyltransferase regulatory chain from Aeromonas salmonicida (strain A449).